A 351-amino-acid polypeptide reads, in one-letter code: MLFQTLKSIGELYKEPMDMVQRRLDSLSKPLGSLGRLEDIIKKLAGITGEVFPCVDKKAVIIMCADNGVVEEGISSCPKDVTSKVTRNFLKGITAINAFAKHTGSDIVVVDIGVDDDMDCEGIVKRKVRKGTWNIAKGPAMTRKEAIEAIEVGISIVEELGRKGVNLLGTGEMGIGNTTTSSAVSTVLTDSKAENMVGRGAGLSDEALKRKISIVKKAIDLNRPDANDPIDVVSKVGGFDIAGLAGCFIGAAACRIPILIDGFISATAALAAVRMEPKVKNFIFPSHGSAEPGSKKVMEALGFEPILNLEMRVGEGTGAALAFHIFDCAVSVYRNMGTFEDACIEQYQPQV.

E315 serves as the catalytic Proton acceptor.

Belongs to the CobT family.

It catalyses the reaction 5,6-dimethylbenzimidazole + nicotinate beta-D-ribonucleotide = alpha-ribazole 5'-phosphate + nicotinate + H(+). It participates in nucleoside biosynthesis; alpha-ribazole biosynthesis; alpha-ribazole from 5,6-dimethylbenzimidazole: step 1/2. In terms of biological role, catalyzes the synthesis of alpha-ribazole-5'-phosphate from nicotinate mononucleotide (NAMN) and 5,6-dimethylbenzimidazole (DMB). The chain is Nicotinate-nucleotide--dimethylbenzimidazole phosphoribosyltransferase from Acetivibrio thermocellus (strain ATCC 27405 / DSM 1237 / JCM 9322 / NBRC 103400 / NCIMB 10682 / NRRL B-4536 / VPI 7372) (Clostridium thermocellum).